A 154-amino-acid chain; its full sequence is 6,7-dimethyl-8-ribityllumazine synthase (154 aa).

Residues Phe22, 56–58, and 80–82 contribute to the 5-amino-6-(D-ribitylamino)uracil site; these read AFE and AVI. 85-86 contacts (2S)-2-hydroxy-3-oxobutyl phosphate; sequence ET. His88 serves as the catalytic Proton donor. Phe113 serves as a coordination point for 5-amino-6-(D-ribitylamino)uracil. Arg127 lines the (2S)-2-hydroxy-3-oxobutyl phosphate pocket.

This sequence belongs to the DMRL synthase family.

The enzyme catalyses (2S)-2-hydroxy-3-oxobutyl phosphate + 5-amino-6-(D-ribitylamino)uracil = 6,7-dimethyl-8-(1-D-ribityl)lumazine + phosphate + 2 H2O + H(+). It functions in the pathway cofactor biosynthesis; riboflavin biosynthesis; riboflavin from 2-hydroxy-3-oxobutyl phosphate and 5-amino-6-(D-ribitylamino)uracil: step 1/2. Catalyzes the formation of 6,7-dimethyl-8-ribityllumazine by condensation of 5-amino-6-(D-ribitylamino)uracil with 3,4-dihydroxy-2-butanone 4-phosphate. This is the penultimate step in the biosynthesis of riboflavin. This is 6,7-dimethyl-8-ribityllumazine synthase from Thermoanaerobacter pseudethanolicus (strain ATCC 33223 / 39E) (Clostridium thermohydrosulfuricum).